The following is a 115-amino-acid chain: Small ribosomal subunit protein uS17 (115 aa).

This sequence belongs to the universal ribosomal protein uS17 family. In terms of assembly, part of the 30S ribosomal subunit.

One of the primary rRNA binding proteins, it binds specifically to the 5'-end of 16S ribosomal RNA. The protein is Small ribosomal subunit protein uS17 of Granulibacter bethesdensis (strain ATCC BAA-1260 / CGDNIH1).